We begin with the raw amino-acid sequence, 545 residues long: Glucose-6-phosphate isomerase (545 aa).

The Proton donor role is filled by glutamate 351. Active-site residues include histidine 382 and lysine 510.

It belongs to the GPI family.

The protein localises to the cytoplasm. It carries out the reaction alpha-D-glucose 6-phosphate = beta-D-fructose 6-phosphate. It functions in the pathway carbohydrate biosynthesis; gluconeogenesis. Its pathway is carbohydrate degradation; glycolysis; D-glyceraldehyde 3-phosphate and glycerone phosphate from D-glucose: step 2/4. Functionally, catalyzes the reversible isomerization of glucose-6-phosphate to fructose-6-phosphate. The protein is Glucose-6-phosphate isomerase of Helicobacter pylori (strain P12).